Consider the following 183-residue polypeptide: Globin-like protein 26 (183 aa).

Positions 1-25 are disordered; the sequence is MGSSTSTPAPPPKKNKPEGRKADNQ. Gly2 is lipidated: N-myristoyl glycine. A Nuclear localization signal motif is present at residues 12–18; it reads PKKNKPE. Positions 26–166 constitute a Globin domain; the sequence is ILNSYQKSIV…VVDQLRFGYS (141 aa). Heme contacts are provided by His77 and His109.

Belongs to the globin family. In terms of assembly, homodimer. Occurs in an equilibrium of monomeric and dimeric forms in solution. As to expression, detected in the head mesodermal cell. In the tail region, detected in the stomatointestinal and anal depressor muscle cells.

The protein resides in the cytoplasm. The protein localises to the nucleus lamina. It is found in the cell membrane. Functionally, plays a role in electron transport. Utilizes the bis-histidyl hexacoordinated complex with iron to transfer electrons to cytochrome c and molecular oxygen. Plays a regulatory role in the periodicity of the defecation cycle under oxidative stress conditions. Not involved in imparting protection against general conditions of oxidative stress. May participate in redox reactions under anaerobic conditions. This chain is Globin-like protein 26, found in Caenorhabditis elegans.